A 139-amino-acid polypeptide reads, in one-letter code: Transcription antitermination protein NusB (139 aa).

It belongs to the NusB family.

Involved in transcription antitermination. Required for transcription of ribosomal RNA (rRNA) genes. Binds specifically to the boxA antiterminator sequence of the ribosomal RNA (rrn) operons. The polypeptide is Transcription antitermination protein NusB (Enterobacter sp. (strain 638)).